The primary structure comprises 468 residues: Chromosomal replication initiator protein DnaA (468 aa).

The segment at 1-84 (MSSSLWLQCM…RFEVGSRPVA (84 aa)) is domain I, interacts with DnaA modulators. Residues 81–113 (RPVAAPKPAPTRTPADVAAESSAPAQLQARKPV) form a disordered region. The tract at residues 84 to 131 (AAPKPAPTRTPADVAAESSAPAQLQARKPVHKTWDDDAQAIADINHRS) is domain II. A domain III, AAA+ region region spans residues 132-348 (NVNPKHKFNN…GALNRVIANA (217 aa)). 4 residues coordinate ATP: Gly-176, Gly-178, Lys-179, and Thr-180. The tract at residues 349-468 (NFTGRPITID…YSNLIRTLSS (120 aa)) is domain IV, binds dsDNA.

The protein belongs to the DnaA family. In terms of assembly, oligomerizes as a right-handed, spiral filament on DNA at oriC.

Its subcellular location is the cytoplasm. Functionally, plays an essential role in the initiation and regulation of chromosomal replication. ATP-DnaA binds to the origin of replication (oriC) to initiate formation of the DNA replication initiation complex once per cell cycle. Binds the DnaA box (a 9 base pair repeat at the origin) and separates the double-stranded (ds)DNA. Forms a right-handed helical filament on oriC DNA; dsDNA binds to the exterior of the filament while single-stranded (ss)DNA is stabiized in the filament's interior. The ATP-DnaA-oriC complex binds and stabilizes one strand of the AT-rich DNA unwinding element (DUE), permitting loading of DNA polymerase. After initiation quickly degrades to an ADP-DnaA complex that is not apt for DNA replication. Binds acidic phospholipids. The protein is Chromosomal replication initiator protein DnaA of Vibrio vulnificus (strain CMCP6).